Reading from the N-terminus, the 1467-residue chain is Neuropathy target esterase sws (1467 aa).

Over 1-34 the chain is Lumenal; the sequence is MDVLEMLRASASGSYNTIFSDAWCQYVSKQITAT. The helical transmembrane segment at 35–55 threads the bilayer; that stretch reads MYMYCAFGLMGVLFLAWFMYF. At 56 to 1467 the chain is on the cytoplasmic side; sequence KRLARLRLRD…RSSTYNETKN (1412 aa). Residue 174-301 coordinates a nucleoside 3',5'-cyclic phosphate; the sequence is IFGHFEKPIF…IRVIQVIMIR (128 aa). Disordered stretches follow at residues 332–353 and 372–416; these read TMSG…ANGP and MGMG…SVHG. A compositionally biased stretch (low complexity) spans 339-350; sequence SQTSQSSRQATA. 2 positions are modified to phosphoserine: serine 450 and serine 459. Residues 488 to 615 and 604 to 731 contribute to the a nucleoside 3',5'-cyclic phosphate site; these read ELGL…VVRR and IVLD…LSHR. A PNPLA domain is found at 958–1124; that stretch reads LVLGGGGARG…VNNLPGHLWR (167 aa). A GXGXXG motif is present at residues 962-967; that stretch reads GGGARG. The short motif at 989 to 993 is the GXSXG element; the sequence is GVSIG. The Nucleophile role is filled by serine 991. Aspartate 1111 (proton acceptor) is an active-site residue. The DGA/G signature appears at 1111-1113; it reads DGG. A Phosphoserine modification is found at serine 1205. A disordered region spans residues 1377–1467; that stretch reads RKMDKSTQST…RSSTYNETKN (91 aa). A compositionally biased stretch (polar residues) spans 1382-1393; the sequence is STQSTPPTSSRA. 2 stretches are compositionally biased toward basic and acidic residues: residues 1396–1406 and 1448–1458; these read RGKEEARHMDN and LADKDEDKENR.

This sequence belongs to the NTE family. Interacts with Pka-C3; interaction inhibits the catalytic function of Pka-C3 and the esterase activity of sws.

It localises to the endoplasmic reticulum membrane. It catalyses the reaction a 1-acyl-sn-glycero-3-phosphocholine + H2O = sn-glycerol 3-phosphocholine + a fatty acid + H(+). Its function is as follows. Phospholipase B that deacylates intracellular phosphatidylcholine (PtdCho), generating glycerophosphocholine (GroPtdCho). This deacylation occurs at both sn-2 and sn-1 positions of PtdCho. Its specific chemical modification by certain organophosphorus (OP) compounds leads to distal axonopathy. Plays a role in the signaling mechanism between neurons and glia that regulates glia wrapping during development of the adult brain. Essential for membrane lipid homeostasis and cell survival in both neurons and glia of the adult brain. This Drosophila yakuba (Fruit fly) protein is Neuropathy target esterase sws.